Here is a 133-residue protein sequence, read N- to C-terminus: Small ribosomal subunit protein uS8 (133 aa).

The tract at residues 1-30 (MANHDPISDMLTRIRNASEKRHETTKVPAS) is disordered. Residues 16–25 (NASEKRHETT) are compositionally biased toward basic and acidic residues.

It belongs to the universal ribosomal protein uS8 family. Part of the 30S ribosomal subunit. Contacts proteins S5 and S12.

One of the primary rRNA binding proteins, it binds directly to 16S rRNA central domain where it helps coordinate assembly of the platform of the 30S subunit. In Synechococcus sp. (strain CC9902), this protein is Small ribosomal subunit protein uS8.